A 368-amino-acid polypeptide reads, in one-letter code: Deoxyhypusine synthase (368 aa).

NAD(+) is bound by residues 104–108 (SNLVS), 130–132 (TTG), E136, and D237. 135–136 (EE) contacts spermidine. D242 is a binding site for spermidine. G284 is an NAD(+) binding site. H289 contributes to the spermidine binding site. 309–310 (TG) contributes to the NAD(+) binding site. Spermidine-binding positions include 315–317 (GSD) and 324–330 (EAVSWGK). Catalysis depends on K330, which acts as the Nucleophile. Position 343-344 (343-344 (DA)) interacts with NAD(+).

It belongs to the deoxyhypusine synthase family. NAD(+) serves as cofactor.

The catalysed reaction is [eIF5A protein]-L-lysine + spermidine = [eIF5A protein]-deoxyhypusine + propane-1,3-diamine. The protein operates within protein modification; eIF5A hypusination. Its function is as follows. Catalyzes the NAD-dependent oxidative cleavage of spermidine and the subsequent transfer of the butylamine moiety of spermidine to the epsilon-amino group of a specific lysine residue of the eIF-5A precursor protein to form the intermediate deoxyhypusine residue. Also able to produce homospermidine from putrescine. This chain is Deoxyhypusine synthase (DHS), found in Arabidopsis thaliana (Mouse-ear cress).